The primary structure comprises 160 residues: Ribosomal RNA large subunit methyltransferase H (160 aa).

Residues glycine 108 and phenylalanine 127 to tryptophan 132 contribute to the S-adenosyl-L-methionine site.

The protein belongs to the RNA methyltransferase RlmH family. Homodimer.

The protein localises to the cytoplasm. It catalyses the reaction pseudouridine(1915) in 23S rRNA + S-adenosyl-L-methionine = N(3)-methylpseudouridine(1915) in 23S rRNA + S-adenosyl-L-homocysteine + H(+). Functionally, specifically methylates the pseudouridine at position 1915 (m3Psi1915) in 23S rRNA. The chain is Ribosomal RNA large subunit methyltransferase H from Beijerinckia indica subsp. indica (strain ATCC 9039 / DSM 1715 / NCIMB 8712).